Consider the following 4451-residue polypeptide: Gramicidin S synthase 2 (4451 aa).

The segment at Asp-467–Gly-1044 is domain 1 (proline-activating). Carrier domains are found at residues Val-971–Lys-1046, Ala-2006–Gln-2081, Arg-3052–Asp-3127, and Ala-4090–Glu-4165. 4 positions are modified to O-(pantetheine 4'-phosphoryl)serine: Ser-1006, Ser-2041, Ser-3087, and Ser-4125. Residues Asp-1521–Gly-2080 form a domain 2 (valine-activating) region. A domain 3 (ornithine-activating) region spans residues Tyr-2538–Gln-3135. The tract at residues Ile-3591–Pro-4173 is domain 4 (leucine-activating).

It belongs to the ATP-dependent AMP-binding enzyme family. In terms of assembly, large multienzyme complex of GrsA and GrsB. It depends on pantetheine 4'-phosphate as a cofactor.

Its pathway is antibiotic biosynthesis; gramicidin S biosynthesis. Functionally, this protein is a multifunctional enzyme, able to activate and polymerize the amino acids Pro, Val, Orn and Leu. Activation sites for these AA consist of individual domains. In Aneurinibacillus migulanus (Bacillus migulanus), this protein is Gramicidin S synthase 2 (grsB).